The primary structure comprises 65 residues: Large ribosomal subunit protein bL35 (65 aa).

Positions 1 to 16 (MPKQKTHRASAKRFKR) are enriched in basic residues. A disordered region spans residues 1-21 (MPKQKTHRASAKRFKRTGSGG).

The protein belongs to the bacterial ribosomal protein bL35 family.

This Streptococcus pyogenes serotype M18 (strain MGAS8232) protein is Large ribosomal subunit protein bL35.